The sequence spans 227 residues: Phosphatidylserine decarboxylase proenzyme (227 aa).

The Schiff-base intermediate with substrate; via pyruvic acid role is filled by serine 169. Serine 169 carries the post-translational modification Pyruvic acid (Ser); by autocatalysis. The interval 197–227 (GRIPTPESGRSSSAEATAAPSASSARRSSAS) is disordered. Residues 206–227 (RSSSAEATAAPSASSARRSSAS) show a composition bias toward low complexity.

The protein belongs to the phosphatidylserine decarboxylase family. PSD-A subfamily. In terms of assembly, heterodimer of a large membrane-associated beta subunit and a small pyruvoyl-containing alpha subunit. Pyruvate serves as cofactor. Is synthesized initially as an inactive proenzyme. Formation of the active enzyme involves a self-maturation process in which the active site pyruvoyl group is generated from an internal serine residue via an autocatalytic post-translational modification. Two non-identical subunits are generated from the proenzyme in this reaction, and the pyruvate is formed at the N-terminus of the alpha chain, which is derived from the carboxyl end of the proenzyme. The post-translation cleavage follows an unusual pathway, termed non-hydrolytic serinolysis, in which the side chain hydroxyl group of the serine supplies its oxygen atom to form the C-terminus of the beta chain, while the remainder of the serine residue undergoes an oxidative deamination to produce ammonia and the pyruvoyl prosthetic group on the alpha chain.

The protein resides in the cell membrane. It carries out the reaction a 1,2-diacyl-sn-glycero-3-phospho-L-serine + H(+) = a 1,2-diacyl-sn-glycero-3-phosphoethanolamine + CO2. The protein operates within phospholipid metabolism; phosphatidylethanolamine biosynthesis; phosphatidylethanolamine from CDP-diacylglycerol: step 2/2. Functionally, catalyzes the formation of phosphatidylethanolamine (PtdEtn) from phosphatidylserine (PtdSer). This chain is Phosphatidylserine decarboxylase proenzyme, found in Salinibacter ruber (strain DSM 13855 / M31).